The following is a 195-amino-acid chain: DnaJ homolog subfamily C member 5 (195 aa).

The J domain occupies 13-82; sequence GDSLYIVLGL…RNIYDKYGSL (70 aa). Positions 162 to 195 are disordered; that stretch reads DMEKEGDGAIVVQPTSATETTQLTSDSHPSYHTE. Over residues 174–189 the composition is skewed to polar residues; the sequence is QPTSATETTQLTSDSH.

In terms of processing, palmitoylated. Palmitoylation occurs probably in the cysteine-rich domain and regulates DNAJC5 stable membrane attachment.

Its subcellular location is the cytoplasm. It localises to the cytosol. The protein localises to the membrane. It is found in the cytoplasmic vesicle. The protein resides in the secretory vesicle. Its subcellular location is the chromaffin granule membrane. It localises to the melanosome. The protein localises to the cell membrane. Its function is as follows. May have an important role in presynaptic function. May be involved in calcium-dependent neurotransmitter release at nerve endings. This is DnaJ homolog subfamily C member 5 from Tetronarce californica (Pacific electric ray).